Here is a 150-residue protein sequence, read N- to C-terminus: Large ribosomal subunit protein bL9 (150 aa).

It belongs to the bacterial ribosomal protein bL9 family.

Binds to the 23S rRNA. The chain is Large ribosomal subunit protein bL9 from Photobacterium profundum (strain SS9).